We begin with the raw amino-acid sequence, 70 residues long: Cuticle protein 16 isoform b (70 aa).

The polypeptide is Cuticle protein 16 isoform b (Limulus polyphemus (Atlantic horseshoe crab)).